Consider the following 113-residue polypeptide: Iron-sulfur cluster insertion protein ErpA (113 aa).

Positions 41, 105, and 107 each coordinate iron-sulfur cluster.

It belongs to the HesB/IscA family. Homodimer. Iron-sulfur cluster serves as cofactor.

Its function is as follows. Required for insertion of 4Fe-4S clusters for at least IspG. The protein is Iron-sulfur cluster insertion protein ErpA of Hydrogenovibrio crunogenus (strain DSM 25203 / XCL-2) (Thiomicrospira crunogena).